Here is a 135-residue protein sequence, read N- to C-terminus: Mediator of RNA polymerase II transcription subunit 10 (135 aa).

Belongs to the Mediator complex subunit 10 family. In terms of assembly, component of the Mediator complex.

It localises to the nucleus. In terms of biological role, component of the Mediator complex, a coactivator involved in the regulated transcription of nearly all RNA polymerase II-dependent genes. Mediator functions as a bridge to convey information from gene-specific regulatory proteins to the basal RNA polymerase II transcription machinery. Mediator is recruited to promoters by direct interactions with regulatory proteins and serves as a scaffold for the assembly of a functional preinitiation complex with RNA polymerase II and the general transcription factors. The sequence is that of Mediator of RNA polymerase II transcription subunit 10 (med10) from Xenopus tropicalis (Western clawed frog).